A 331-amino-acid polypeptide reads, in one-letter code: UPF0194 membrane protein YbhG (331 aa).

The N-terminal stretch at 1–19 is a signal peptide; it reads MKKPVVIGLAIAAIVAVIA. A coiled-coil region spans residues 107 to 208; the sequence is EEIAQAAAAV…LDLQDTTLIA (102 aa).

Belongs to the UPF0194 family.

It is found in the periplasm. In Salmonella paratyphi A (strain ATCC 9150 / SARB42), this protein is UPF0194 membrane protein YbhG.